Consider the following 295-residue polypeptide: MTSFMSRVWCKVESTGRQLPIVLNAVLVFSITAEVSYLVLVEAPFEPEQKKTDWSTIWTGLHLFAQYFMLGNITWNASLFVKTNPSIRGVFLGGDTLGQGWRYCYNCETHTPPRCSHCYDCNVCVLRRDHHCVFFGQCVGFHNYRYFLTCLLFMWAGLLYAVVMNAEVFIFILKEGVTFHSVMLLLVPWIMLVSGQVTTRAFAFAFIADTCVVGFLLVAAFLFFHVALMLRGQTTREWYSTRRPYSLGTMANIRECLGKNWYFCWLCPLIPSPLPGDGINFKVTASLEPKKQAVH.

Residues 1–20 lie on the Cytoplasmic side of the membrane; it reads MTSFMSRVWCKVESTGRQLP. The chain crosses the membrane as a helical span at residues 21–41; the sequence is IVLNAVLVFSITAEVSYLVLV. Residues 42–60 lie on the Extracellular side of the membrane; it reads EAPFEPEQKKTDWSTIWTG. A helical transmembrane segment spans residues 61–81; the sequence is LHLFAQYFMLGNITWNASLFV. The Cytoplasmic portion of the chain corresponds to 82–151; sequence KTNPSIRGVF…HNYRYFLTCL (70 aa). Residues 102-152 enclose the DHHC domain; the sequence is RYCYNCETHTPPRCSHCYDCNVCVLRRDHHCVFFGQCVGFHNYRYFLTCLL. Residue Cys132 is the S-palmitoyl cysteine intermediate of the active site. A helical membrane pass occupies residues 152–172; the sequence is LFMWAGLLYAVVMNAEVFIFI. The Extracellular portion of the chain corresponds to 173 to 176; it reads LKEG. Residues 177 to 197 traverse the membrane as a helical segment; it reads VTFHSVMLLLVPWIMLVSGQV. The Cytoplasmic portion of the chain corresponds to 198 to 203; that stretch reads TTRAFA. Residues 204 to 224 traverse the membrane as a helical segment; sequence FAFIADTCVVGFLLVAAFLFF. Over 225 to 295 the chain is Extracellular; that stretch reads HVALMLRGQT…SLEPKKQAVH (71 aa).

The protein belongs to the DHHC palmitoyltransferase family.

The protein localises to the membrane. The enzyme catalyses L-cysteinyl-[protein] + hexadecanoyl-CoA = S-hexadecanoyl-L-cysteinyl-[protein] + CoA. Functionally, probable palmitoyltransferase that could catalyze the addition of palmitate onto various protein substrates. The chain is Probable palmitoyltransferase ZDHHC24 from Danio rerio (Zebrafish).